A 145-amino-acid chain; its full sequence is 3-dehydroquinate dehydratase (145 aa).

The Proton acceptor role is filled by Tyr-23. Substrate contacts are provided by Asn-73, His-79, and Asp-86. The active-site Proton donor is the His-99. Substrate contacts are provided by residues 100 to 101 (LS) and Arg-110.

Belongs to the type-II 3-dehydroquinase family. Homododecamer.

It carries out the reaction 3-dehydroquinate = 3-dehydroshikimate + H2O. It participates in metabolic intermediate biosynthesis; chorismate biosynthesis; chorismate from D-erythrose 4-phosphate and phosphoenolpyruvate: step 3/7. Functionally, catalyzes a trans-dehydration via an enolate intermediate. This Desulfitobacterium hafniense (strain DSM 10664 / DCB-2) protein is 3-dehydroquinate dehydratase.